The chain runs to 457 residues: tRNA-2-methylthio-N(6)-dimethylallyladenosine synthase (457 aa).

An MTTase N-terminal domain is found at 3–120 (KKVYVKTFGC…LPQMIDQRRA (118 aa)). [4Fe-4S] cluster is bound by residues C12, C49, C83, C157, C161, and C164. In terms of domain architecture, Radical SAM core spans 143 to 377 (RVEGPSAFVS…QATIEENVAR (235 aa)). A TRAM domain is found at 380–447 (RSMVGKVERI…PHSLRGELLL (68 aa)).

This sequence belongs to the methylthiotransferase family. MiaB subfamily. Monomer. It depends on [4Fe-4S] cluster as a cofactor.

Its subcellular location is the cytoplasm. It catalyses the reaction N(6)-dimethylallyladenosine(37) in tRNA + (sulfur carrier)-SH + AH2 + 2 S-adenosyl-L-methionine = 2-methylsulfanyl-N(6)-dimethylallyladenosine(37) in tRNA + (sulfur carrier)-H + 5'-deoxyadenosine + L-methionine + A + S-adenosyl-L-homocysteine + 2 H(+). Its function is as follows. Catalyzes the methylthiolation of N6-(dimethylallyl)adenosine (i(6)A), leading to the formation of 2-methylthio-N6-(dimethylallyl)adenosine (ms(2)i(6)A) at position 37 in tRNAs that read codons beginning with uridine. The polypeptide is tRNA-2-methylthio-N(6)-dimethylallyladenosine synthase (Burkholderia ambifaria (strain ATCC BAA-244 / DSM 16087 / CCUG 44356 / LMG 19182 / AMMD) (Burkholderia cepacia (strain AMMD))).